Here is a 1720-residue protein sequence, read N- to C-terminus: DNA-directed RNA polymerase I subunit RPA1 (1720 aa).

Cys64, Cys67, Cys74, His77, Cys104, and Cys107 together coordinate Zn(2+). Residues Leu110–Asn201 form a clamp region. Zn(2+)-binding residues include Cys205 and Cys208. Ser240 is modified (phosphoserine). Residues Phe320 to Gly426 form a clamp region. The segment at Asp403 to Gly416 is rudder. Residues Lys424, Arg429, and Arg436 each contribute to the DNA site. An involved in RRN3 binding to Pol I complex region spans residues Tyr468–Val542. Residue Arg552 participates in RNA binding. Positions 588, 590, and 592 each coordinate Mg(2+). An RNA-binding site is contributed by Asp592. Positions Lys805–Phe883 are funnel. Residues Lys960–Val1001 form a bridging helix region. The mediates the interaction with TOP2A stretch occupies residues Ala1060–Tyr1155. Residues Pro1207–Leu1248 are trigger loop. Arg1249 contacts DNA. Residues Arg1365 to Met1498 form a disordered region. Residues Thr1373 to Gln1390 are compositionally biased toward basic and acidic residues. A Phosphoserine modification is found at Ser1386. Acidic residues-rich tracts occupy residues Glu1391 to Ala1412 and Glu1422 to Gln1446. Basic and acidic residues predominate over residues Glu1447 to Glu1461. Positions Gln1462–Pro1474 are enriched in acidic residues.

It belongs to the RNA polymerase beta' chain family. Component of the RNA polymerase I (Pol I) complex consisting of 13 subunits: a ten-subunit catalytic core composed of POLR1A/RPA1, POLR1B/RPA2, POLR1C/RPAC1, POLR1D/RPAC2, POLR1H/RPA12, POLR2E/RPABC1, POLR2F/RPABC2, POLR2H/RPABC3, POLR2K/RPABC4 and POLR2L/RPABC5; a mobile stalk subunit POLR1F/RPA43 protruding from the core and additional subunits homologous to general transcription factors POLR1E/RPA49 and POLR1G/RPA34. Part of Pol I pre-initiation complex (PIC), in which Pol I core assembles with RRN3 and promoter-bound UTBF and SL1/TIF-IB complex. Interacts (via dock II domain) with TOP2A; this interaction may assist Pol I transcription initiation by releasing supercoils occurring during DNA unwinding. Interacts with CAVIN1; this interaction induces the dissociation of Pol I complex paused at rDNA terminator sequences. Interacts with MYO1C. Interacts with ERBB2. Interacts with DDX11. Interacts with RECQL5. Mg(2+) serves as cofactor.

Its subcellular location is the nucleus. The protein localises to the nucleolus. The protein resides in the chromosome. It carries out the reaction RNA(n) + a ribonucleoside 5'-triphosphate = RNA(n+1) + diphosphate. In terms of biological role, catalytic core component of RNA polymerase I (Pol I), a DNA-dependent RNA polymerase which synthesizes ribosomal RNA precursors using the four ribonucleoside triphosphates as substrates. Transcribes 47S pre-rRNAs from multicopy rRNA gene clusters, giving rise to 5.8S, 18S and 28S ribosomal RNAs. Pol I-mediated transcription cycle proceeds through transcription initiation, transcription elongation and transcription termination stages. During transcription initiation, Pol I pre-initiation complex (PIC) is recruited by the selectivity factor 1 (SL1/TIF-IB) complex bound to the core promoter that precedes an rDNA repeat unit. The PIC assembly bends the promoter favoring the formation of the transcription bubble and promoter escape. Once the polymerase has escaped from the promoter it enters the elongation phase during which RNA is actively polymerized, based on complementarity with the template DNA strand. Highly processive, assembles in structures referred to as 'Miller trees' where many elongating Pol I complexes queue and transcribe the same rDNA coding regions. At terminator sequences downstream of the rDNA gene, PTRF interacts with Pol I and halts Pol I transcription leading to the release of the RNA transcript and polymerase from the DNA. Forms Pol I active center together with the second largest subunit POLR1B/RPA2. Appends one nucleotide at a time to the 3' end of the nascent RNA, with POLR1A/RPA1 contributing a Mg(2+)-coordinating DxDGD motif, and POLR1B/RPA2 participating in the coordination of a second Mg(2+) ion and providing lysine residues believed to facilitate Watson-Crick base pairing between the incoming nucleotide and the template base. Typically, Mg(2+) ions direct a 5' nucleoside triphosphate to form a phosphodiester bond with the 3' hydroxyl of the preceding nucleotide of the nascent RNA, with the elimination of pyrophosphate. Has proofreading activity: Pauses and backtracks to allow the cleavage of a missincorporated nucleotide via POLR1H/RPA12. High Pol I processivity is associated with decreased transcription fidelity. The chain is DNA-directed RNA polymerase I subunit RPA1 from Homo sapiens (Human).